The chain runs to 438 residues: MPCTCTWRNWRQWIRPLVAVIYLVSIVVAVPLCVWELQKLEVGIHTKAWFIAGIFLLLTIPISLWVILQHLVHYTQPELQKPIIRILWMVPIYSLDSWIALKYPGIAIYVDTCRECYEAYVIYNFMGFLTNYLTNRYPNLVLILEAKDQQKHFPPLCCCPPWAMGEVLLFRCKLGVLQYTVVRPFTTIVALICELLGIYDEGNFSFSNAWTYLVIINNMSQLFAMYCLLLFYKVLKEELSPIQPVGKFLCVKLVVFVSFWQAVVIALLVKVGVISEKHTWEWQTVEAVATGLQDFIICIEMFLAAIAHHYTFSYKPYVQEAEEGSCFDSFLAMWDVSDIRDDISEQVRHVGRTVRGHPRKKLFPEDQDQNEHTSLLSSSSQDAISIASSMPPSPMGHYQGFGHTVTPQTTPTTAKISDEILSDTIGEKKEPSDKSVDS.

The next 7 membrane-spanning stretches (helical) occupy residues 17–37, 48–68, 86–106, 179–199, 212–232, 254–274, and 287–307; these read LVAV…VWEL, AWFI…WVIL, ILWM…YPGI, YTVV…LGIY, YLVI…LLFY, VVFV…VGVI, and AVAT…AAIA. The interval 355–438 is disordered; the sequence is RGHPRKKLFP…KEPSDKSVDS (84 aa). Composition is skewed to low complexity over residues 374 to 390 and 404 to 413; these read SLLS…ASSM and TVTPQTTPTT. Ser422 is modified (phosphoserine). Residues 425–438 are compositionally biased toward basic and acidic residues; that stretch reads IGEKKEPSDKSVDS.

It belongs to the TMEM184 family. In terms of tissue distribution, widely expressed with higher expression in lung, kidney, spleen, pancreas, thymus, prostate, testis, ovary, small intestine and thyroid.

The protein resides in the membrane. Possible tumor suppressor which may play a role in cell growth. This Homo sapiens (Human) protein is Transmembrane protein 184C (TMEM184C).